An 84-amino-acid chain; its full sequence is Magnetosome protein MamR (84 aa).

The protein belongs to the magnetosome MamR family.

The protein localises to the magnetosome. May play a role in controlling magnetite number and size but not in control of magnetite morphology. The protein is Magnetosome protein MamR of Paramagnetospirillum magneticum (strain ATCC 700264 / AMB-1) (Magnetospirillum magneticum).